Consider the following 244-residue polypeptide: Probable fimbrial assembly protein FimC, serogroup H1 (244 aa).

This chain is Probable fimbrial assembly protein FimC, serogroup H1 (fimC), found in Dichelobacter nodosus (Bacteroides nodosus).